A 473-amino-acid polypeptide reads, in one-letter code: Cannabinoid receptor 1 (473 aa).

Residues 1–118 lie on the Extracellular side of the membrane; sequence MKSILDGLAD…CFMILTASQQ (118 aa). A required for mitochondrial localization region spans residues 2–23; that stretch reads KSILDGLADTTFRTITTDLLYM. 2 N-linked (GlcNAc...) asparagine glycosylation sites follow: asparagine 79 and asparagine 85. Residues 119–144 form a helical membrane-spanning segment; the sequence is LIIAVLSLTLGTFTVLENFLVLCVIL. At 145–156 the chain is on the cytoplasmic side; the sequence is QSRTLRCRPSYH. A helical transmembrane segment spans residues 157–177; it reads FIGSLAVADLLGSVIFVYSFL. Topologically, residues 178-189 are extracellular; the sequence is DFHVFHRKDSSN. Residues 190–214 traverse the membrane as a helical segment; that stretch reads VFLFKLGGVTASFTASVGSLFLTAI. Over 215 to 234 the chain is Cytoplasmic; that stretch reads DRYISIHRPLAYKRIVTRTK. The chain crosses the membrane as a helical span at residues 235–257; it reads AVIAFCVMWTIAIIIAVLPLLGW. The Extracellular portion of the chain corresponds to 258-275; the sequence is NCKKLKSVCSDIFPLIDE. A helical membrane pass occupies residues 276 to 301; that stretch reads NYLMFWIGVTSILLLFIVYAYVYILW. The Cytoplasmic segment spans residues 302–346; that stretch reads KAHSHAVRMLQRGTQKSIIIHTSEDGKVQITRPEQTRMDIRLAKT. Residues 347–367 form a helical membrane-spanning segment; it reads LVLILVVLIICWGPLLAIMVY. The Extracellular portion of the chain corresponds to 368–379; the sequence is DVFGKMNNPIKT. A helical membrane pass occupies residues 380–401; it reads VFAFCSMLCLMDSTVNPIIYAL. Topologically, residues 402–473 are cytoplasmic; it reads RSQDLRHAFL…VSTETSGEAV (72 aa). Residue cysteine 417 is the site of S-palmitoyl cysteine attachment.

Belongs to the G-protein coupled receptor 1 family. Palmitoylation at Cys-417 is important for recruitment at both plasma membrane and lipid rafts and association with G protein alpha subunits.

It localises to the cell membrane. The protein resides in the mitochondrion outer membrane. Its subcellular location is the cell projection. The protein localises to the axon. It is found in the presynapse. With respect to regulation, hemopressin, a peptide derived from hemoglobin subunit alpha (HBA1 and/or HBA2), acts as an antagonist peptide: hemopressin-binding efficiently blocks cannabinoid receptor CNR1 and subsequent signaling. Its function is as follows. G-protein coupled receptor for cannabinoids. Mediates many cannabinoid-induced effects in the central nervous system (CNS), as well as in peripheral tissues. Regulates cellular respiration and energy production in response to cannabinoids. Signaling typically involves reduction in cyclic AMP. The protein is Cannabinoid receptor 1 (CNR1) of Taricha granulosa (Roughskin newt).